A 246-amino-acid chain; its full sequence is 3-deoxy-manno-octulosonate cytidylyltransferase (246 aa).

Belongs to the KdsB family. As to quaternary structure, homodimer.

The protein resides in the cytoplasm. The catalysed reaction is 3-deoxy-alpha-D-manno-oct-2-ulosonate + CTP = CMP-3-deoxy-beta-D-manno-octulosonate + diphosphate. It functions in the pathway nucleotide-sugar biosynthesis; CMP-3-deoxy-D-manno-octulosonate biosynthesis; CMP-3-deoxy-D-manno-octulosonate from 3-deoxy-D-manno-octulosonate and CTP: step 1/1. It participates in bacterial outer membrane biogenesis; lipopolysaccharide biosynthesis. Functionally, activates KDO (a required 8-carbon sugar) for incorporation into bacterial lipopolysaccharide in Gram-negative bacteria. This is 3-deoxy-manno-octulosonate cytidylyltransferase (kpsU) from Escherichia coli.